The following is a 330-amino-acid chain: MKTAYIAKQRQISFVKSHFSRQLEERLGLIEVQAPILSRVGDGTQDNLSGCEKAVQVKVKALPDAQFEVVHSLAKWKRQTLGQHDFSAGEGLYTHMKALRPDEDRLSPLHSVYVDQWDWERVMGDGERQLSTLKSTVEAIWAGIKATEAAVNEEFGLAPFLPDQIHFVHSQELLSRYPDLDAKGRERAIAKDLGAVFLVGIGGKLSDGHRHDVRAPDYDDWSTPSELGHAGLNGDILVWNPVLEDAFELSSMGIRVDADTLKHQLALTGDEDRLQLEWHQALLRGEMPQTIGGGIGQSRLTMLLLQLPHIGQVQCGVWPAAVRESVPSLL.

This sequence belongs to the class-II aminoacyl-tRNA synthetase family. AsnA subfamily.

It localises to the cytoplasm. The catalysed reaction is L-aspartate + NH4(+) + ATP = L-asparagine + AMP + diphosphate + H(+). It participates in amino-acid biosynthesis; L-asparagine biosynthesis; L-asparagine from L-aspartate (ammonia route): step 1/1. The polypeptide is Aspartate--ammonia ligase (Shigella flexneri serotype 5b (strain 8401)).